Here is an 826-residue protein sequence, read N- to C-terminus: Putative ankyrin repeat protein RBE_0220 (826 aa).

ANK repeat units follow at residues 308-337 (LGTS…DQHA), 342-371 (IDMS…DPNY), 375-404 (DNDT…DPNK), 445-474 (NDFT…DVNA), 478-507 (DGFT…NPDV), 512-541 (TKSS…NPNL), 545-574 (DGTT…DINK), and 578-607 (NGDN…DLKK).

This Rickettsia bellii (strain RML369-C) protein is Putative ankyrin repeat protein RBE_0220.